The primary structure comprises 798 residues: Bromodomain-containing protein 2 (798 aa).

Residue Met-1 is modified to N-acetylmethionine. Residues 1–21 (MLQNVTPHKLPGEGNAGLLGL) are disordered. The residue at position 6 (Thr-6) is a Phosphothreonine. The residue at position 36 (Ser-36) is a Phosphoserine. A disordered region spans residues 53–72 (LQLAPANPPPPEVSNPKKPG). Positions 73–179 (RVTNQLQYLH…KIFLQKVASM (107 aa)) constitute a Bromo 1 domain. Asp-111, Tyr-154, Asn-155, Lys-156, Asp-159, and Asp-160 together coordinate a protein. 3 disordered regions span residues 267 to 348 (PPAQ…LSEQ), 454 to 645 (DEPL…YDEK), and 736 to 798 (KRLQ…SDSG). A compositionally biased stretch (low complexity) spans 284–297 (TTTPTPTAILAPGS). 3 positions are modified to phosphoserine: Ser-297, Ser-300, and Ser-304. Residues 315-331 (MRRESGRPIKPPRKDLP) show a composition bias toward basic and acidic residues. The Bromo 2 domain maps to 343–452 (GKLSEQLKHC…DVFEFRYAKM (110 aa)). Residues 480–512 (SSEESSSESSSEEEEEEEEDEDEEESESSDSEE) are compositionally biased toward acidic residues. Residues 542 to 564 (KPKRKREKKEKKKKRKAEKHRGR) show a composition bias toward basic residues. Residues 553–557 (KKKRK) carry the Nuclear localization signal motif. The NET domain occupies 630–712 (DSEEEEESRP…SCLRKKPRKP (83 aa)). Ser-631 is modified (phosphoserine). The segment covering 772–792 (SASSSSSDSSSSSSSSSSSDT) has biased composition (low complexity).

Belongs to the BET family. In terms of assembly, homodimer. Interacts with E2F1. Interacts with (acetylated) STAT3; promoting STAT3 recruitment to chromatin. Interacts with CTCF; promoting BRD2 recruitment to chromatin. As to expression, predominantly expressed in the testis, followed by ovary, placenta, embryo and to a lower extent in somatic tissues.

It is found in the nucleus. The protein localises to the chromosome. Chromatin reader protein that specifically recognizes and binds histone H4 acetylated at 'Lys-5' and 'Lys-12' (H4K5ac and H4K12ac, respectively), thereby controlling gene expression and remodeling chromatin structures. Recruits transcription factors and coactivators to target gene sites, and activates RNA polymerase II machinery for transcriptional elongation. Plays a key role in genome compartmentalization via its association with CTCF and cohesin: recruited to chromatin by CTCF and promotes formation of topologically associating domains (TADs) via its ability to bind acetylated histones, contributing to CTCF boundary formation and enhancer insulation. Also recognizes and binds acetylated non-histone proteins, such as STAT3. Involved in inflammatory response by regulating differentiation of naive CD4(+) T-cells into T-helper Th17: recognizes and binds STAT3 acetylated at 'Lys-87', promoting STAT3 recruitment to chromatin. In addition to acetylated lysines, also recognizes and binds lysine residues on histones that are both methylated and acetylated on the same side chain to form N6-acetyl-N6-methyllysine (Kacme), an epigenetic mark of active chromatin associated with increased transcriptional initiation. Specifically binds histone H4 acetyl-methylated at 'Lys-5' and 'Lys-12' (H4K5acme and H4K12acme, respectively). The chain is Bromodomain-containing protein 2 from Mus musculus (Mouse).